The primary structure comprises 417 residues: Serine hydroxymethyltransferase (417 aa).

Residues L112 and G116–L118 each bind (6S)-5,6,7,8-tetrahydrofolate. Position 221 is an N6-(pyridoxal phosphate)lysine (K221). Residue E247 coordinates (6S)-5,6,7,8-tetrahydrofolate.

It belongs to the SHMT family. In terms of assembly, homodimer. Pyridoxal 5'-phosphate is required as a cofactor.

Its subcellular location is the cytoplasm. The catalysed reaction is (6R)-5,10-methylene-5,6,7,8-tetrahydrofolate + glycine + H2O = (6S)-5,6,7,8-tetrahydrofolate + L-serine. It functions in the pathway one-carbon metabolism; tetrahydrofolate interconversion. It participates in amino-acid biosynthesis; glycine biosynthesis; glycine from L-serine: step 1/1. Catalyzes the reversible interconversion of serine and glycine with tetrahydrofolate (THF) serving as the one-carbon carrier. This reaction serves as the major source of one-carbon groups required for the biosynthesis of purines, thymidylate, methionine, and other important biomolecules. Also exhibits THF-independent aldolase activity toward beta-hydroxyamino acids, producing glycine and aldehydes, via a retro-aldol mechanism. The chain is Serine hydroxymethyltransferase from Borrelia recurrentis (strain A1).